Consider the following 410-residue polypeptide: Serine/threonine transporter SstT (410 aa).

The next 9 membrane-spanning stretches (helical) occupy residues 11 to 31 (VSLVKRIIIGIIIGITLAVTV), 45 to 65 (FVGALKAVAPVLVFFLVISAI), 79 to 99 (ILILYGFSTFLASLTAVVASF), 138 to 158 (ALLNANYIGILTWAVLLGIAL), 179 to 199 (IVTWVINFAPIGIMGLVFDAI), 214 to 234 (LAVLLGTMCFVAFVMNPLIVF), 285 to 305 (ISIPLGATINMAGAAVTISVL), 327 to 347 (VLSAIAAAGASGVAGGSLLLI), and 353 to 373 (LFGIPNDIAMQVVGVGFIIGV).

It belongs to the dicarboxylate/amino acid:cation symporter (DAACS) (TC 2.A.23) family.

The protein resides in the cell membrane. The enzyme catalyses L-serine(in) + Na(+)(in) = L-serine(out) + Na(+)(out). It carries out the reaction L-threonine(in) + Na(+)(in) = L-threonine(out) + Na(+)(out). Functionally, involved in the import of serine and threonine into the cell, with the concomitant import of sodium (symport system). This chain is Serine/threonine transporter SstT, found in Geobacillus thermodenitrificans (strain NG80-2).